We begin with the raw amino-acid sequence, 543 residues long: Protein P78/83 (543 aa).

3 disordered regions span residues 147 to 222 (QALP…QPAA), 235 to 325 (RNEK…SLSN), and 373 to 400 (MAKS…ANTP). Residues 182 to 221 (AAPPPPPSPVPNIPAPPPPPPPSMSELPPAPPMPTEPQPA) show a composition bias toward pro residues. Residues 226-246 (DRQQLLEAIRNEKNRTRLRPV) form the WH2 domain. Positions 271 to 321 (PKPPSASPPPPPPPPPPPAPPAPPPMVDLSSAPPPPPLVDLPSEMLPPPAP) are enriched in pro residues. Positions 375–384 (KSSSEATSND) are enriched in polar residues.

In terms of assembly, forms a complex with proteins C42 and E27. Interacts with host actin-related protein 2/3 complex. Interacts with protein Ac102.

The protein localises to the host cytoplasm. It is found in the host nucleus. Plays a role in the transport of the nucleocapsids from the cytoplasm toward the host nucleus together with the host actin-polymerizing Arp2/3 complex. In Lepidoptera (butterflies and moths), this protein is Protein P78/83 (P61).